The following is a 263-amino-acid chain: Endonuclease 8 (263 aa).

The Schiff-base intermediate with DNA role is filled by Pro-2. Glu-3 serves as the catalytic Proton donor. Lys-53 acts as the Proton donor; for beta-elimination activity in catalysis. 3 residues coordinate DNA: Gln-70, Arg-125, and Asn-169. Residues 229–263 form an FPG-type zinc finger; the sequence is KVFHRDGEPCERCGGIIEKTTLSSRPFYWCPGCQH. The Proton donor; for delta-elimination activity role is filled by Arg-253.

It belongs to the FPG family. The cofactor is Zn(2+).

It catalyses the reaction 2'-deoxyribonucleotide-(2'-deoxyribose 5'-phosphate)-2'-deoxyribonucleotide-DNA = a 3'-end 2'-deoxyribonucleotide-(2,3-dehydro-2,3-deoxyribose 5'-phosphate)-DNA + a 5'-end 5'-phospho-2'-deoxyribonucleoside-DNA + H(+). Its function is as follows. Involved in base excision repair of DNA damaged by oxidation or by mutagenic agents. Acts as a DNA glycosylase that recognizes and removes damaged bases. Has a preference for oxidized pyrimidines, such as thymine glycol, 5,6-dihydrouracil and 5,6-dihydrothymine. Has AP (apurinic/apyrimidinic) lyase activity and introduces nicks in the DNA strand. Cleaves the DNA backbone by beta-delta elimination to generate a single-strand break at the site of the removed base with both 3'- and 5'-phosphates. The protein is Endonuclease 8 of Escherichia coli O127:H6 (strain E2348/69 / EPEC).